Here is an 82-residue protein sequence, read N- to C-terminus: Sec-independent protein translocase protein TatA (82 aa).

Residues 1 to 21 (MGGISIWQLLIIAVIIVLLFG) traverse the membrane as a helical segment. The interval 46–82 (DEPAKDAKKDADFVPQNLEKKEAETVEKQKQNDKEQA) is disordered.

This sequence belongs to the TatA/E family. The Tat system comprises two distinct complexes: a TatABC complex, containing multiple copies of TatA, TatB and TatC subunits, and a separate TatA complex, containing only TatA subunits. Substrates initially bind to the TatABC complex, which probably triggers association of the separate TatA complex to form the active translocon.

It is found in the cell inner membrane. In terms of biological role, part of the twin-arginine translocation (Tat) system that transports large folded proteins containing a characteristic twin-arginine motif in their signal peptide across membranes. TatA could form the protein-conducting channel of the Tat system. The sequence is that of Sec-independent protein translocase protein TatA from Aliivibrio fischeri (strain MJ11) (Vibrio fischeri).